The primary structure comprises 314 residues: 4-diphosphocytidyl-2-C-methyl-D-erythritol kinase (314 aa).

Lys11 is an active-site residue. An ATP-binding site is contributed by 95–105; sequence PIGAGLAGGST. Residue Asp137 is part of the active site.

Belongs to the GHMP kinase family. IspE subfamily.

It carries out the reaction 4-CDP-2-C-methyl-D-erythritol + ATP = 4-CDP-2-C-methyl-D-erythritol 2-phosphate + ADP + H(+). It functions in the pathway isoprenoid biosynthesis; isopentenyl diphosphate biosynthesis via DXP pathway; isopentenyl diphosphate from 1-deoxy-D-xylulose 5-phosphate: step 3/6. Its function is as follows. Catalyzes the phosphorylation of the position 2 hydroxy group of 4-diphosphocytidyl-2C-methyl-D-erythritol. The polypeptide is 4-diphosphocytidyl-2-C-methyl-D-erythritol kinase (Synechococcus elongatus (strain ATCC 33912 / PCC 7942 / FACHB-805) (Anacystis nidulans R2)).